The chain runs to 303 residues: Bifunctional protein FolD (303 aa).

NADP(+) is bound by residues 175-177 (GVS) and Ile243.

Belongs to the tetrahydrofolate dehydrogenase/cyclohydrolase family. As to quaternary structure, homodimer.

It catalyses the reaction (6R)-5,10-methylene-5,6,7,8-tetrahydrofolate + NADP(+) = (6R)-5,10-methenyltetrahydrofolate + NADPH. The catalysed reaction is (6R)-5,10-methenyltetrahydrofolate + H2O = (6R)-10-formyltetrahydrofolate + H(+). It participates in one-carbon metabolism; tetrahydrofolate interconversion. Catalyzes the oxidation of 5,10-methylenetetrahydrofolate to 5,10-methenyltetrahydrofolate and then the hydrolysis of 5,10-methenyltetrahydrofolate to 10-formyltetrahydrofolate. The sequence is that of Bifunctional protein FolD from Xanthomonas axonopodis pv. citri (strain 306).